The following is a 301-amino-acid chain: ATP synthase gamma chain (301 aa).

The protein belongs to the ATPase gamma chain family. In terms of assembly, F-type ATPases have 2 components, CF(1) - the catalytic core - and CF(0) - the membrane proton channel. CF(1) has five subunits: alpha(3), beta(3), gamma(1), delta(1), epsilon(1). CF(0) has three main subunits: a, b and c.

Its subcellular location is the cell inner membrane. Its function is as follows. Produces ATP from ADP in the presence of a proton gradient across the membrane. The gamma chain is believed to be important in regulating ATPase activity and the flow of protons through the CF(0) complex. The sequence is that of ATP synthase gamma chain from Bordetella avium (strain 197N).